The following is a 48-amino-acid chain: Cytochrome b559 subunit beta (48 aa).

Residues 23–39 (WLAVHALAIPSVFFLGS) traverse the membrane as a helical segment. Histidine 27 lines the heme pocket.

The protein belongs to the PsbE/PsbF family. As to quaternary structure, heterodimer of an alpha subunit and a beta subunit. PSII is composed of 1 copy each of membrane proteins PsbA, PsbB, PsbC, PsbD, PsbE, PsbF, PsbH, PsbI, PsbJ, PsbK, PsbL, PsbM, PsbT, PsbX, PsbY, Psb30/Ycf12, peripheral proteins PsbO, CyanoQ (PsbQ), PsbU, PsbV and a large number of cofactors. It forms dimeric complexes. Requires heme b as cofactor.

The protein resides in the cellular thylakoid membrane. Its function is as follows. This b-type cytochrome is tightly associated with the reaction center of photosystem II (PSII). PSII is a light-driven water:plastoquinone oxidoreductase that uses light energy to abstract electrons from H(2)O, generating O(2) and a proton gradient subsequently used for ATP formation. It consists of a core antenna complex that captures photons, and an electron transfer chain that converts photonic excitation into a charge separation. The chain is Cytochrome b559 subunit beta from Prochlorococcus marinus (strain MIT 9301).